Reading from the N-terminus, the 76-residue chain is Envelope small membrane protein (76 aa).

Topologically, residues 1-14 are virion surface; the sequence is MLQLVNDNGLVVNV. The chain crosses the membrane as a helical span at residues 15–35; it reads ILWLFVLFFLLIISITFVQLV. The Intravirion portion of the chain corresponds to 36 to 76; the sequence is NLCFTCHRLCNSAVYTPIGRLYRVYKSYMRIDPLPSTVIDV.

This sequence belongs to the alphacoronaviruses E protein family. In terms of assembly, homopentamer. Interacts with membrane protein M in the budding compartment of the host cell, which is located between endoplasmic reticulum and the Golgi complex. Interacts with Nucleoprotein. Interacts with host IRF3; this interaction inhibits type I IFN production.

Its subcellular location is the host Golgi apparatus membrane. It is found in the host endoplasmic reticulum. Its function is as follows. Plays a central role in virus morphogenesis and assembly. Acts as a viroporin and self-assembles in host membranes forming pentameric protein-lipid pores that allow ion transport. Also plays a role in the induction of apoptosis. Counteracts the production of type I interferon by interacting with host IRF3 component and preventing its translocation to the host nucleus. This Sus scrofa (Pig) protein is Envelope small membrane protein.